The primary structure comprises 159 residues: NADH-quinone oxidoreductase subunit B (159 aa).

[4Fe-4S] cluster contacts are provided by cysteine 36, cysteine 37, cysteine 102, and cysteine 132.

Belongs to the complex I 20 kDa subunit family. As to quaternary structure, NDH-1 is composed of 14 different subunits. Subunits NuoB, C, D, E, F, and G constitute the peripheral sector of the complex. It depends on [4Fe-4S] cluster as a cofactor.

Its subcellular location is the cell inner membrane. It carries out the reaction a quinone + NADH + 5 H(+)(in) = a quinol + NAD(+) + 4 H(+)(out). Its function is as follows. NDH-1 shuttles electrons from NADH, via FMN and iron-sulfur (Fe-S) centers, to quinones in the respiratory chain. Couples the redox reaction to proton translocation (for every two electrons transferred, four hydrogen ions are translocated across the cytoplasmic membrane), and thus conserves the redox energy in a proton gradient. The polypeptide is NADH-quinone oxidoreductase subunit B (Verminephrobacter eiseniae (strain EF01-2)).